Consider the following 227-residue polypeptide: Translation initiation factor 6 (227 aa).

It belongs to the eIF-6 family.

In terms of biological role, binds to the 50S ribosomal subunit and prevents its association with the 30S ribosomal subunit to form the 70S initiation complex. The protein is Translation initiation factor 6 of Methanococcus vannielii (strain ATCC 35089 / DSM 1224 / JCM 13029 / OCM 148 / SB).